Consider the following 484-residue polypeptide: Glutamyl-tRNA(Gln) amidotransferase subunit A (484 aa).

Active-site charge relay system residues include Lys76 and Ser151. The Acyl-ester intermediate role is filled by Ser175.

This sequence belongs to the amidase family. GatA subfamily. Heterotrimer of A, B and C subunits.

The catalysed reaction is L-glutamyl-tRNA(Gln) + L-glutamine + ATP + H2O = L-glutaminyl-tRNA(Gln) + L-glutamate + ADP + phosphate + H(+). Functionally, allows the formation of correctly charged Gln-tRNA(Gln) through the transamidation of misacylated Glu-tRNA(Gln) in organisms which lack glutaminyl-tRNA synthetase. The reaction takes place in the presence of glutamine and ATP through an activated gamma-phospho-Glu-tRNA(Gln). The polypeptide is Glutamyl-tRNA(Gln) amidotransferase subunit A (Alkalilimnicola ehrlichii (strain ATCC BAA-1101 / DSM 17681 / MLHE-1)).